A 146-amino-acid polypeptide reads, in one-letter code: 3-dehydroquinate dehydratase (146 aa).

Tyrosine 24 serves as the catalytic Proton acceptor. Substrate is bound by residues asparagine 73, histidine 79, and aspartate 86. The active-site Proton donor is the histidine 99. Substrate contacts are provided by residues 100 to 101 (LS) and arginine 110.

This sequence belongs to the type-II 3-dehydroquinase family. As to quaternary structure, homododecamer.

The catalysed reaction is 3-dehydroquinate = 3-dehydroshikimate + H2O. It participates in metabolic intermediate biosynthesis; chorismate biosynthesis; chorismate from D-erythrose 4-phosphate and phosphoenolpyruvate: step 3/7. Catalyzes a trans-dehydration via an enolate intermediate. The chain is 3-dehydroquinate dehydratase from Shewanella baltica (strain OS223).